The sequence spans 827 residues: Translation initiation factor IF-2 (827 aa).

The disordered stretch occupies residues 49–205; it reads ALNREKEEKE…GAPDKKREWE (157 aa). Basic and acidic residues-rich tracts occupy residues 50-73, 96-106, 116-129, 137-150, 157-168, and 182-205; these read LNREKEEKEKKEQEKKQVEQKAEA, RPREQRSDRPQ, PEPRDKDKGRRPGE, RPRDDRRRFDKERG, FGEKKERPPFPR, and EAPKGENKEPERRKGAPDKKREWE. The 170-residue stretch at 326 to 495 folds into the tr-type G domain; the sequence is PRPPIVTVMG…LLVADLKELK (170 aa). Residues 335 to 342 are G1; that stretch reads GHVDHGKT. 335-342 lines the GTP pocket; that stretch reads GHVDHGKT. The interval 360-364 is G2; sequence GITQH. Positions 381 to 384 are G3; it reads DTPG. Residues 381-385 and 435-438 contribute to the GTP site; these read DTPGH and NKID. The G4 stretch occupies residues 435-438; that stretch reads NKID. Residues 471 to 473 are G5; that stretch reads SAL.

This sequence belongs to the TRAFAC class translation factor GTPase superfamily. Classic translation factor GTPase family. IF-2 subfamily.

Its subcellular location is the cytoplasm. Its function is as follows. One of the essential components for the initiation of protein synthesis. Protects formylmethionyl-tRNA from spontaneous hydrolysis and promotes its binding to the 30S ribosomal subunits. Also involved in the hydrolysis of GTP during the formation of the 70S ribosomal complex. The sequence is that of Translation initiation factor IF-2 from Carboxydothermus hydrogenoformans (strain ATCC BAA-161 / DSM 6008 / Z-2901).